We begin with the raw amino-acid sequence, 153 residues long: SsrA-binding protein (153 aa).

The interval 129-153 (KREDMKKKDQSREMAQALREKSKSH) is disordered.

Belongs to the SmpB family.

Its subcellular location is the cytoplasm. Its function is as follows. Required for rescue of stalled ribosomes mediated by trans-translation. Binds to transfer-messenger RNA (tmRNA), required for stable association of tmRNA with ribosomes. tmRNA and SmpB together mimic tRNA shape, replacing the anticodon stem-loop with SmpB. tmRNA is encoded by the ssrA gene; the 2 termini fold to resemble tRNA(Ala) and it encodes a 'tag peptide', a short internal open reading frame. During trans-translation Ala-aminoacylated tmRNA acts like a tRNA, entering the A-site of stalled ribosomes, displacing the stalled mRNA. The ribosome then switches to translate the ORF on the tmRNA; the nascent peptide is terminated with the 'tag peptide' encoded by the tmRNA and targeted for degradation. The ribosome is freed to recommence translation, which seems to be the essential function of trans-translation. The chain is SsrA-binding protein from Geobacter sulfurreducens (strain ATCC 51573 / DSM 12127 / PCA).